Reading from the N-terminus, the 524-residue chain is Probable metalloreductase AIM14 (524 aa).

Transmembrane regions (helical) follow at residues 24–44 (VNIKYGYVILALSIVHMVLSI), 69–89 (SIPFWVSTLVWLAIFAFLSIF), 104–121 (RLGRMAYCLVPFTIFISL), 143–163 (WISRLIFATAIGHGLGFLYKW), 179–199 (FLGVTVFALMPVLIFASVNVM), 206–226 (LFYILHNVTLWMFVVLIAFHA), and 230–250 (VPLLAVINLALLGYQIYQRFF). The 118-residue stretch at 105-222 (LGRMAYCLVP…VTLWMFVVLI (118 aa)) folds into the Ferric oxidoreductase domain. One can recognise an FAD-binding FR-type domain in the interval 248–372 (RFFKSYYLHD…GGSGISFGLP (125 aa)).

This sequence belongs to the ferric reductase (FRE) family. AIM14 subfamily.

Its subcellular location is the membrane. Functionally, probable cell surface metalloreductase. May be involved in iron or copper homeostasis. This chain is Probable metalloreductase AIM14 (AIM14), found in Scheffersomyces stipitis (strain ATCC 58785 / CBS 6054 / NBRC 10063 / NRRL Y-11545) (Yeast).